The sequence spans 205 residues: Rho-related GTP-binding protein RhoQ (205 aa).

16–23 (GDGAVGKT) serves as a coordination point for GTP. An Effector region motif is present at residues 38–46 (YVPTVFDHY). GTP contacts are provided by residues 63–67 (DTAGQ) and 121–124 (TQID). Cys-202 bears the Cysteine methyl ester mark. Residue Cys-202 is the site of S-farnesyl cysteine attachment. The propeptide at 203–205 (LIT) is removed in mature form.

This sequence belongs to the small GTPase superfamily. Rho family. Interacts with EXO70, CDC42EP1, CDC42EP2 and CDC42EP3 in a GTP-dependent manner. Interacts with CDC42EP4, PARD6A, PARD6G (and probably PARD6B) in a GTP-dependent manner. Part of a quaternary complex containing PARD3, some PARD6 protein (PARD6A, PARD6B or PARD6G) and some atypical PKC protein (PRKCI or PRKCZ). Interacts with GOPC. Interacts with ARHGAP33/TCGAP. In terms of processing, may be post-translationally modified by both palmitoylation and polyisoprenylation.

Its subcellular location is the cytoplasm. It is found in the cell membrane. With respect to regulation, regulated by guanine nucleotide exchange factors (GEFs) which promote the exchange of bound GDP for free GTP, GTPase activating proteins (GAPs) which increase the GTP hydrolysis activity, and GDP dissociation inhibitors which inhibit the dissociation of the nucleotide from the GTPase. Its function is as follows. Plasma membrane-associated small GTPase which cycles between an active GTP-bound and an inactive GDP-bound state. In active state binds to a variety of effector proteins to regulate cellular responses. Involved in epithelial cell polarization processes. May play a role in CFTR trafficking to the plasma membrane. Causes the formation of thin, actin-rich surface projections called filopodia. The polypeptide is Rho-related GTP-binding protein RhoQ (Rhoq) (Mus musculus (Mouse)).